A 93-amino-acid chain; its full sequence is Large ribosomal subunit protein uL23 (93 aa).

Belongs to the universal ribosomal protein uL23 family. Part of the 50S ribosomal subunit. Contacts protein L29, and trigger factor when it is bound to the ribosome.

Functionally, one of the early assembly proteins it binds 23S rRNA. One of the proteins that surrounds the polypeptide exit tunnel on the outside of the ribosome. Forms the main docking site for trigger factor binding to the ribosome. This Campylobacter jejuni subsp. jejuni serotype O:6 (strain 81116 / NCTC 11828) protein is Large ribosomal subunit protein uL23.